The chain runs to 331 residues: Lipoyl synthase (331 aa).

The [4Fe-4S] cluster site is built by C60, C65, C71, C86, C90, C93, and S301. A Radical SAM core domain is found at 72 to 290 (WSRGTATFML…REEGMQLGFL (219 aa)).

Belongs to the radical SAM superfamily. Lipoyl synthase family. [4Fe-4S] cluster serves as cofactor.

It localises to the cytoplasm. It catalyses the reaction [[Fe-S] cluster scaffold protein carrying a second [4Fe-4S](2+) cluster] + N(6)-octanoyl-L-lysyl-[protein] + 2 oxidized [2Fe-2S]-[ferredoxin] + 2 S-adenosyl-L-methionine + 4 H(+) = [[Fe-S] cluster scaffold protein] + N(6)-[(R)-dihydrolipoyl]-L-lysyl-[protein] + 4 Fe(3+) + 2 hydrogen sulfide + 2 5'-deoxyadenosine + 2 L-methionine + 2 reduced [2Fe-2S]-[ferredoxin]. The protein operates within protein modification; protein lipoylation via endogenous pathway; protein N(6)-(lipoyl)lysine from octanoyl-[acyl-carrier-protein]: step 2/2. Its function is as follows. Catalyzes the radical-mediated insertion of two sulfur atoms into the C-6 and C-8 positions of the octanoyl moiety bound to the lipoyl domains of lipoate-dependent enzymes, thereby converting the octanoylated domains into lipoylated derivatives. The polypeptide is Lipoyl synthase (Deinococcus radiodurans (strain ATCC 13939 / DSM 20539 / JCM 16871 / CCUG 27074 / LMG 4051 / NBRC 15346 / NCIMB 9279 / VKM B-1422 / R1)).